Consider the following 67-residue polypeptide: MDARLLEILVCPICKGPLSYDRAAQELICNADKLAYPIRDGIPVMLVDEARQTVEGTPVDLNPGSVA.

It belongs to the UPF0434 family.

The polypeptide is UPF0434 protein Bphy_0537 (Paraburkholderia phymatum (strain DSM 17167 / CIP 108236 / LMG 21445 / STM815) (Burkholderia phymatum)).